Here is a 206-residue protein sequence, read N- to C-terminus: Cytochrome c oxidase assembly protein CtaG (206 aa).

Over 1-17 (MPEVQPSALPKPAPRLG) the chain is Cytoplasmic. A helical; Signal-anchor for type II membrane protein transmembrane segment spans residues 18–40 (RDAAVASICGFVVALMVGASFAA). The Periplasmic segment spans residues 41–206 (VPFYDWFCRT…GEPDQRKGNL (166 aa)).

Belongs to the COX11/CtaG family.

It localises to the cell inner membrane. Exerts its effect at some terminal stage of cytochrome c oxidase synthesis, probably by being involved in the insertion of the copper B into subunit I. The polypeptide is Cytochrome c oxidase assembly protein CtaG (Rhodopseudomonas palustris (strain BisB5)).